Consider the following 124-residue polypeptide: MIKIDIPAPNVTITERQQSANDNEPKIKPIHGFIDFHQIPRDKGGIFMFYNIHDELLFVGKARKLRQRIKKHFEDTVSPIKHHRDEVYKIEVCVVDDPMEREIYETYIINTQHSKYNIDKVFFK.

The GIY-YIG domain occupies 42–118 (DKGGIFMFYN…INTQHSKYNI (77 aa)).

This is an uncharacterized protein from Bacillus subtilis (strain 168).